The primary structure comprises 896 residues: Alanine--tRNA ligase (896 aa).

Residues H580, H584, C683, and H687 each coordinate Zn(2+).

Belongs to the class-II aminoacyl-tRNA synthetase family. Zn(2+) is required as a cofactor.

The protein resides in the cytoplasm. The enzyme catalyses tRNA(Ala) + L-alanine + ATP = L-alanyl-tRNA(Ala) + AMP + diphosphate. In terms of biological role, catalyzes the attachment of alanine to tRNA(Ala) in a two-step reaction: alanine is first activated by ATP to form Ala-AMP and then transferred to the acceptor end of tRNA(Ala). Also edits incorrectly charged Ser-tRNA(Ala) and Gly-tRNA(Ala) via its editing domain. This chain is Alanine--tRNA ligase, found in Mycolicibacterium smegmatis (strain ATCC 700084 / mc(2)155) (Mycobacterium smegmatis).